A 421-amino-acid chain; its full sequence is ATP-dependent RNA helicase RhlB (421 aa).

A Q motif motif is present at residues 9-37 (QKFSDFALHPQVVEALEKKRFYNCTPIQA). The Helicase ATP-binding domain maps to 40–219 (LPLTLAGRDV…FEQMNNAEYV (180 aa)). 53–60 (AQTGTGKT) provides a ligand contact to ATP. The DEAD box signature appears at 165 to 168 (DEAD). The Helicase C-terminal domain occupies 245-390 (RLLQTLIEEE…VSKYNPEALM (146 aa)). A disordered region spans residues 396–421 (PLRLTRSRPGNGPRRAGAPRNRRRSG). Positions 402–414 (SRPGNGPRRAGAP) are enriched in low complexity.

It belongs to the DEAD box helicase family. RhlB subfamily. Component of the RNA degradosome, which is a multiprotein complex involved in RNA processing and mRNA degradation.

Its subcellular location is the cytoplasm. It carries out the reaction ATP + H2O = ADP + phosphate + H(+). DEAD-box RNA helicase involved in RNA degradation. Has RNA-dependent ATPase activity and unwinds double-stranded RNA. This is ATP-dependent RNA helicase RhlB from Salmonella dublin (strain CT_02021853).